An 83-amino-acid polypeptide reads, in one-letter code: Putative snRNP Sm-like protein (83 aa).

The Sm domain occupies 9–81 (KPMDVLKNAL…VIFVSPSKGD (73 aa)).

The protein belongs to the snRNP Sm proteins family.

The sequence is that of Putative snRNP Sm-like protein from Thermoplasma volcanium (strain ATCC 51530 / DSM 4299 / JCM 9571 / NBRC 15438 / GSS1).